The following is a 73-amino-acid chain: Cytochrome b559 subunit alpha (73 aa).

A helical membrane pass occupies residues 21–35; the sequence is IIHSITVPSLFIAGW. Residue His-23 participates in heme binding.

The protein belongs to the PsbE/PsbF family. Heterodimer of an alpha subunit and a beta subunit. PSII is composed of 1 copy each of membrane proteins PsbA, PsbB, PsbC, PsbD, PsbE, PsbF, PsbH, PsbI, PsbJ, PsbK, PsbL, PsbM, PsbT, PsbY, PsbZ, Psb30/Ycf12, at least 3 peripheral proteins of the oxygen-evolving complex and a large number of cofactors. It forms dimeric complexes. Heme b serves as cofactor.

It localises to the plastid. The protein localises to the chloroplast thylakoid membrane. Its function is as follows. This b-type cytochrome is tightly associated with the reaction center of photosystem II (PSII). PSII is a light-driven water:plastoquinone oxidoreductase that uses light energy to abstract electrons from H(2)O, generating O(2) and a proton gradient subsequently used for ATP formation. It consists of a core antenna complex that captures photons, and an electron transfer chain that converts photonic excitation into a charge separation. The protein is Cytochrome b559 subunit alpha of Bigelowiella natans (Pedinomonas minutissima).